The sequence spans 216 residues: Ribosomal RNA large subunit methyltransferase E (216 aa).

5 residues coordinate S-adenosyl-L-methionine: glycine 60, tryptophan 62, aspartate 80, aspartate 96, and aspartate 121. Residue lysine 161 is the Proton acceptor of the active site.

This sequence belongs to the class I-like SAM-binding methyltransferase superfamily. RNA methyltransferase RlmE family.

Its subcellular location is the cytoplasm. It catalyses the reaction uridine(2552) in 23S rRNA + S-adenosyl-L-methionine = 2'-O-methyluridine(2552) in 23S rRNA + S-adenosyl-L-homocysteine + H(+). In terms of biological role, specifically methylates the uridine in position 2552 of 23S rRNA at the 2'-O position of the ribose in the fully assembled 50S ribosomal subunit. The polypeptide is Ribosomal RNA large subunit methyltransferase E (Pseudomonas fluorescens (strain SBW25)).